A 327-amino-acid chain; its full sequence is GMP reductase (327 aa).

Residue Cys176 is the Thioimidate intermediate of the active site. 205-228 (IIADGGIRTHGDIAKSIRFGASMV) provides a ligand contact to NADP(+).

It belongs to the IMPDH/GMPR family. GuaC type 2 subfamily.

The enzyme catalyses IMP + NH4(+) + NADP(+) = GMP + NADPH + 2 H(+). In terms of biological role, catalyzes the irreversible NADPH-dependent deamination of GMP to IMP. It functions in the conversion of nucleobase, nucleoside and nucleotide derivatives of G to A nucleotides, and in maintaining the intracellular balance of A and G nucleotides. This Streptococcus agalactiae serotype Ia (strain ATCC 27591 / A909 / CDC SS700) protein is GMP reductase.